Here is a 68-residue protein sequence, read N- to C-terminus: Large ribosomal subunit protein eL24 (68 aa).

Residues cysteine 7, cysteine 10, cysteine 33, and cysteine 37 each contribute to the Zn(2+) site. The segment at 7-37 (CSYCGREFEPGTGKMFVRNDGRVLFFCSSKC) adopts a C4-type zinc-finger fold.

This sequence belongs to the eukaryotic ribosomal protein eL24 family. In terms of assembly, part of the 50S ribosomal subunit. Forms a cluster with proteins L3 and L14. Requires Zn(2+) as cofactor.

Its function is as follows. Binds to the 23S rRNA. The sequence is that of Large ribosomal subunit protein eL24 from Thermococcus gammatolerans (strain DSM 15229 / JCM 11827 / EJ3).